Reading from the N-terminus, the 426-residue chain is Enolase (426 aa).

Q163 lines the (2R)-2-phosphoglycerate pocket. E205 (proton donor) is an active-site residue. Residues D242, E283, and D310 each coordinate Mg(2+). Residues K335, R364, S365, and K386 each contribute to the (2R)-2-phosphoglycerate site. K335 acts as the Proton acceptor in catalysis.

It belongs to the enolase family. Mg(2+) serves as cofactor.

The protein resides in the cytoplasm. It localises to the secreted. It is found in the cell surface. It carries out the reaction (2R)-2-phosphoglycerate = phosphoenolpyruvate + H2O. Its pathway is carbohydrate degradation; glycolysis; pyruvate from D-glyceraldehyde 3-phosphate: step 4/5. Functionally, catalyzes the reversible conversion of 2-phosphoglycerate (2-PG) into phosphoenolpyruvate (PEP). It is essential for the degradation of carbohydrates via glycolysis. This chain is Enolase, found in Aquifex aeolicus (strain VF5).